The chain runs to 363 residues: Fructose-bisphosphate aldolase, muscle type (363 aa).

The substrate site is built by arginine 56 and lysine 147. Lysine 230 serves as the catalytic Schiff-base intermediate with dihydroxyacetone-P.

Belongs to the class I fructose-bisphosphate aldolase family. Homotetramer. Expressed mainly in the skeletal muscle, heart muscle, brain, and some other tissues, but probably not in liver.

It carries out the reaction beta-D-fructose 1,6-bisphosphate = D-glyceraldehyde 3-phosphate + dihydroxyacetone phosphate. It functions in the pathway carbohydrate degradation; glycolysis; D-glyceraldehyde 3-phosphate and glycerone phosphate from D-glucose: step 4/4. The chain is Fructose-bisphosphate aldolase, muscle type from Lethenteron camtschaticum (Japanese lamprey).